We begin with the raw amino-acid sequence, 191 residues long: Glutathione-dependent formaldehyde-activating enzyme (191 aa).

The CENP-V/GFA domain occupies 22–169 (FQGGTLECHC…LTELGLPPYD (148 aa)). Cys29, Cys31, Cys50, Cys52, Cys55, Cys97, and Cys100 together coordinate Zn(2+).

The protein belongs to the Gfa family. Zn(2+) serves as cofactor.

The catalysed reaction is S-(hydroxymethyl)glutathione = glutathione + formaldehyde. The protein operates within one-carbon metabolism; formaldehyde degradation; formate from formaldehyde (glutathione route): step 1/3. Catalyzes the condensation of formaldehyde and glutathione to S-hydroxymethylglutathione. The sequence is that of Glutathione-dependent formaldehyde-activating enzyme from Xanthomonas axonopodis pv. citri (strain 306).